A 414-amino-acid chain; its full sequence is Putative transporter AmpG 4 (414 aa).

12 helical membrane passes run 15 to 35 (IFIL…TLAV), 44 to 63 (IAVI…KVFW), 84 to 104 (WLIL…KENP), 109 to 129 (TSFY…DIAV), 150 to 170 (VFGY…LAEI), 177 to 197 (LTFC…ITVN), 230 to 250 (FAVT…MLGA), 268 to 288 (IIAK…GGIV), 295 to 315 (FKGL…FIWL), 324 to 344 (ALLI…TALV), 360 to 379 (YALL…IYAG), and 389 to 409 (GFFL…MYLN).

It belongs to the major facilitator superfamily.

The protein resides in the cell inner membrane. The sequence is that of Putative transporter AmpG 4 (ampG4) from Rickettsia conorii (strain ATCC VR-613 / Malish 7).